The primary structure comprises 788 residues: Cadherin-related family member 4 (788 aa).

The signal sequence occupies residues 1-16 (MVLLRLLVFLFAPVVS). Topologically, residues 17–686 (DLCSLPCFIN…DTEAFWQPQP (670 aa)) are extracellular. Cadherin domains follow at residues 237 to 338 (LEQA…PPRC), 339 to 449 (LPAL…APRT), 444 to 554 (ACAP…EPPF), and 551 to 674 (EPPF…TPML). A glycan (N-linked (GlcNAc...) asparagine) is linked at Asn242. Residues 687 to 707 (WFVVVLTATGALLLLALGWLL) traverse the membrane as a helical segment. The Cytoplasmic portion of the chain corresponds to 708 to 788 (GRLLQGLAQL…NTHTGARRWL (81 aa)).

It is found in the membrane. Its function is as follows. Cadherins are calcium-dependent cell adhesion proteins. They preferentially interact with themselves in a homophilic manner in connecting cells; cadherins may thus contribute to the sorting of heterogeneous cell types. The chain is Cadherin-related family member 4 (CDHR4) from Homo sapiens (Human).